The following is a 1493-amino-acid chain: Myosin-13 (1493 aa).

The region spanning 18 to 67 is the Myosin N-terminal SH3-like domain; that stretch reads KVGSIVWVQDPEEAWIDGEVVEVNGEDIKVQCTSGKTVVAKGSNTYPKDM. Residues 72–741 form the Myosin motor domain; the sequence is SGVDDMTTLA…QMAELDDRRT (670 aa). ATP-binding positions include 166 to 173 and 219 to 227; these read GESGAGKT and NNNSSRFGK. Actin-binding regions lie at residues 504-538, 540-563, 598-622, and 622-644; these read LIEK…YETL, DNKY…AGDV, FPPL…KQQL, and LASL…KPNN. 6 consecutive IQ domains span residues 744–773, 767–796, 792–821, 813–842, 836–865, and 859–888; these read LGRA…AAIN, LRNA…EAAA, REAA…VTVQ, YIEA…ATTV, KTKA…AAIT, and LKKA…DARD. A coiled-coil region spans residues 889–1057; the sequence is TVVLQAAKSM…NFLKESVLTT (169 aa). The interval 1085–1114 is disordered; the sequence is QLSGAEFTTPPRIQESGSDTKSRGSHIDPQ. The span at 1102 to 1114 shows a compositional bias: basic and acidic residues; that stretch reads SDTKSRGSHIDPQ. Positions 1161 to 1444 constitute a Dilute domain; that stretch reads DRLVQMIGSA…IASMTGVMTD (284 aa).

The protein belongs to the TRAFAC class myosin-kinesin ATPase superfamily. Myosin family. Plant myosin class XI subfamily. In terms of assembly, homodimer.

Myosin heavy chain that is required for the cell cycle-regulated transport of various organelles and proteins for their segregation. Functions by binding with its tail domain to receptor proteins on organelles and exerting force with its N-terminal motor domain against actin filaments, thereby transporting its cargo along polarized actin cables. This chain is Myosin-13 (XI-G), found in Arabidopsis thaliana (Mouse-ear cress).